The sequence spans 684 residues: Protein EXECUTER 1, chloroplastic (684 aa).

Over residues methionine 1–arginine 31 the composition is skewed to polar residues. Residues methionine 1–arginine 46 constitute a chloroplast transit peptide. Residues methionine 1–arginine 66 form a disordered region. Residues serine 48–serine 61 are compositionally biased toward low complexity. In terms of domain architecture, UVR spans aspartate 127–asparagine 162. Residues threonine 278–glutamate 318 are disordered. The segment covering serine 301–glutamate 318 has biased composition (acidic residues).

It localises to the plastid. It is found in the chloroplast. Together with EX2, enables higher plants to perceive singlet oxygen as a stress signal in plastid that activates a genetically determined nuclear stress response program which triggers a programmed cell death (PCD). This transfer of singlet oxygen-induced stress-related signals from the plastid to the nucleus that triggers genetically controlled PCD pathway is unique to photosynthetic eukaryotes and operates under mild stress conditions, impeding photosystem II (PSII) without causing photooxidative damage of the plant. The sequence is that of Protein EXECUTER 1, chloroplastic from Arabidopsis thaliana (Mouse-ear cress).